The primary structure comprises 101 residues: Urease subunit gamma (101 aa).

This sequence belongs to the urease gamma subunit family. In terms of assembly, heterotrimer of UreA (gamma), UreB (beta) and UreC (alpha) subunits. Three heterotrimers associate to form the active enzyme.

It is found in the cytoplasm. It catalyses the reaction urea + 2 H2O + H(+) = hydrogencarbonate + 2 NH4(+). It functions in the pathway nitrogen metabolism; urea degradation; CO(2) and NH(3) from urea (urease route): step 1/1. The protein is Urease subunit gamma of Geobacillus kaustophilus (strain HTA426).